A 425-amino-acid chain; its full sequence is Ribonuclease T2-like (425 aa).

Positions M1–A18 are cleaved as a signal peptide. Disulfide bonds link C32–C51, C40–C99, C50–C175, C107–C167, and C245–C281. N42 carries N-linked (GlcNAc...) asparagine glycosylation. The active site involves H92. An N-linked (GlcNAc...) asparagine glycan is attached at N134. Catalysis depends on residues E160 and H164.

It belongs to the RNase T2 family.

It is found in the vacuole lumen. The protein localises to the cytoplasm. The enzyme catalyses a ribonucleotidyl-ribonucleotide-RNA + H2O = a 3'-end 3'-phospho-ribonucleotide-RNA + a 5'-end dephospho-ribonucleoside-RNA + H(+). In terms of biological role, rnase which modulates cell survival under stress conditions. Released from the vacuole to the cytoplasm during stress to promote tRNA and rRNA cleavage and to activate separately a downstream pathway that promotes cell death. Involved in cell size, vacuolar morphology and growth at high temperatures and high salt concentration. The polypeptide is Ribonuclease T2-like (RNY1) (Kluyveromyces lactis (strain ATCC 8585 / CBS 2359 / DSM 70799 / NBRC 1267 / NRRL Y-1140 / WM37) (Yeast)).